The sequence spans 1089 residues: Probable transport protein MmpL8 (1089 aa).

Residues 1 to 26 (MCDVLMQPVRTPRPSTNLRSKPLRPT) form a disordered region. The next 12 membrane-spanning stretches (helical) occupy residues 44-64 (WVVI…VPSL), 222-242 (ITIL…TMVL), 257-277 (LVAI…IFMS), 316-336 (IGKV…GMVF), 349-369 (LGIS…ALMV), 400-420 (KTHL…AGLA), 555-575 (AIST…LLGG), 874-894 (IIAM…RAIV), 898-918 (YLIG…VIVF), 930-950 (IPGL…MLLI), 973-993 (GGVI…LVFA), and 996-1016 (GSVV…TFLV). The segment at 1056–1078 (RTKRKPLLPKEEEEQSPPDDDDL) is disordered. Over residues 1066-1078 (EEEEQSPPDDDDL) the composition is skewed to acidic residues.

Belongs to the resistance-nodulation-cell division (RND) (TC 2.A.6) family. MmpL subfamily.

The protein resides in the cell membrane. This chain is Probable transport protein MmpL8 (mmpL8), found in Mycobacterium tuberculosis (strain ATCC 25177 / H37Ra).